We begin with the raw amino-acid sequence, 224 residues long: Cytidylate kinase (224 aa).

11 to 19 (GPAAAGKST) contacts ATP.

It belongs to the cytidylate kinase family. Type 1 subfamily.

Its subcellular location is the cytoplasm. The enzyme catalyses CMP + ATP = CDP + ADP. It carries out the reaction dCMP + ATP = dCDP + ADP. In Listeria innocua serovar 6a (strain ATCC BAA-680 / CLIP 11262), this protein is Cytidylate kinase.